Consider the following 363-residue polypeptide: Glutamate--cysteine ligase (363 aa).

Belongs to the glutamate--cysteine ligase type 2 family. YbdK subfamily.

It catalyses the reaction L-cysteine + L-glutamate + ATP = gamma-L-glutamyl-L-cysteine + ADP + phosphate + H(+). Catalyzes the synthesis of gamma-glutamylcysteine (gamma-GC), the main low-molecular-weight thiol compound instead of glutathione in halophilic archaea. The protein is Glutamate--cysteine ligase of Haloquadratum walsbyi (strain DSM 16790 / HBSQ001).